The primary structure comprises 269 residues: MEMO1 family protein TV1383 (269 aa).

The protein belongs to the MEMO1 family.

In Thermoplasma volcanium (strain ATCC 51530 / DSM 4299 / JCM 9571 / NBRC 15438 / GSS1), this protein is MEMO1 family protein TV1383.